Reading from the N-terminus, the 502-residue chain is Sulfate adenylyltransferase (502 aa).

Residues 1 to 167 (MPSPHGGVLQ…LEAIQLPVHY (167 aa)) are N-terminal. A catalytic region spans residues 168 to 393 (DYPGWRKTPA…LRESNPSRPK (226 aa)). Gln195 lines the sulfate pocket. ATP contacts are provided by residues 195–198 (QTRN) and 289–292 (GRDH). Catalysis depends on residues Thr196, Arg197, and Asn198. Arg197 lines the sulfate pocket. Residue Ala293 coordinates sulfate. Val331 contributes to the ATP binding site. The interval 394 to 502 (QGFALVLSET…FLEDQGFFQF (109 aa)) is required for oligomerization; adenylyl-sulfate kinase-like.

It belongs to the sulfate adenylyltransferase family. As to quaternary structure, homohexamer. Dimer of trimers.

Its subcellular location is the cytoplasm. The catalysed reaction is sulfate + ATP + H(+) = adenosine 5'-phosphosulfate + diphosphate. It functions in the pathway sulfur metabolism; hydrogen sulfide biosynthesis; sulfite from sulfate: step 1/3. Functionally, catalyzes the first intracellular reaction of sulfate assimilation, forming adenosine-5'-phosphosulfate (APS) from inorganic sulfate and ATP. Plays an important role in sulfate activation as a component of the biosynthesis pathway of sulfur-containing amino acids. This is Sulfate adenylyltransferase from Kluyveromyces lactis (strain ATCC 8585 / CBS 2359 / DSM 70799 / NBRC 1267 / NRRL Y-1140 / WM37) (Yeast).